The sequence spans 144 residues: UPF0178 protein Exig_1155 (144 aa).

The segment at 110-144 (IRRAGGRTKGPKKRTRQEDASFEQSFSRLLTEKTD) is disordered. Over residues 113-124 (AGGRTKGPKKRT) the composition is skewed to basic residues.

It belongs to the UPF0178 family.

The chain is UPF0178 protein Exig_1155 from Exiguobacterium sibiricum (strain DSM 17290 / CCUG 55495 / CIP 109462 / JCM 13490 / 255-15).